The primary structure comprises 366 residues: Carbamoyl phosphate synthase small chain (366 aa).

A CPSase region spans residues 1 to 171; the sequence is MKKRKLILED…KPYVVPGRGL (171 aa). L-glutamine-binding residues include S46, G220, and G222. The Glutamine amidotransferase type-1 domain occupies 172–359; it reads RVVMVDFGAK…LNLIKASKVK (188 aa). Catalysis depends on C247, which acts as the Nucleophile. The L-glutamine site is built by L248, Q251, N289, and Y292. Active-site residues include H332 and E334.

This sequence belongs to the CarA family. Composed of two chains; the small (or glutamine) chain promotes the hydrolysis of glutamine to ammonia, which is used by the large (or ammonia) chain to synthesize carbamoyl phosphate. Tetramer of heterodimers (alpha,beta)4.

The enzyme catalyses hydrogencarbonate + L-glutamine + 2 ATP + H2O = carbamoyl phosphate + L-glutamate + 2 ADP + phosphate + 2 H(+). It carries out the reaction L-glutamine + H2O = L-glutamate + NH4(+). It participates in amino-acid biosynthesis; L-arginine biosynthesis; carbamoyl phosphate from bicarbonate: step 1/1. It functions in the pathway pyrimidine metabolism; UMP biosynthesis via de novo pathway; (S)-dihydroorotate from bicarbonate: step 1/3. Small subunit of the glutamine-dependent carbamoyl phosphate synthetase (CPSase). CPSase catalyzes the formation of carbamoyl phosphate from the ammonia moiety of glutamine, carbonate, and phosphate donated by ATP, constituting the first step of 2 biosynthetic pathways, one leading to arginine and/or urea and the other to pyrimidine nucleotides. The small subunit (glutamine amidotransferase) binds and cleaves glutamine to supply the large subunit with the substrate ammonia. The polypeptide is Carbamoyl phosphate synthase small chain (Oceanobacillus iheyensis (strain DSM 14371 / CIP 107618 / JCM 11309 / KCTC 3954 / HTE831)).